The chain runs to 527 residues: DNA polymerase epsilon subunit 2 (527 aa).

It belongs to the DNA polymerase epsilon subunit B family. Component of the DNA polymerase epsilon complex consisting of four subunits: the catalytic subunit POLE and the accessory subunits POLE2, POLE3 and POLE4.

The protein localises to the nucleus. Functionally, accessory component of the DNA polymerase epsilon complex. Participates in DNA repair and in chromosomal DNA replication. The sequence is that of DNA polymerase epsilon subunit 2 (POLE2) from Bos taurus (Bovine).